The sequence spans 94 residues: Copper resistance protein K (94 aa).

An N-terminal signal peptide occupies residues Met-1 to Ala-20.

As to quaternary structure, monomer in the copper-bound form. Homodimer as apoprotein. Dissociates into monomers upon copper binding.

Its subcellular location is the periplasm. Involved in resistance to copper. Can bind up to 2 copper ions. Has higher affinity for Cu(+) than for Cu(2+). This is Copper resistance protein K (copK) from Cupriavidus metallidurans (strain ATCC 43123 / DSM 2839 / NBRC 102507 / CH34) (Ralstonia metallidurans).